Consider the following 142-residue polypeptide: ATP synthase epsilon chain (142 aa).

The protein belongs to the ATPase epsilon chain family. F-type ATPases have 2 components, CF(1) - the catalytic core - and CF(0) - the membrane proton channel. CF(1) has five subunits: alpha(3), beta(3), gamma(1), delta(1), epsilon(1). CF(0) has three main subunits: a, b and c.

The protein localises to the cell inner membrane. Produces ATP from ADP in the presence of a proton gradient across the membrane. The sequence is that of ATP synthase epsilon chain from Haemophilus influenzae (strain 86-028NP).